The chain runs to 86 residues: Candiduxin-1 (86 aa).

An N-terminal signal peptide occupies residues 1 to 21 (MKTLLLTLVVLTIACLDLGYT). Disulfide bonds link cysteine 24–cysteine 45, cysteine 38–cysteine 62, cysteine 66–cysteine 78, and cysteine 79–cysteine 84.

Belongs to the three-finger toxin family. Short-chain subfamily. Orphan group IX sub-subfamily. Expressed by the venom gland.

Its subcellular location is the secreted. The protein is Candiduxin-1 of Bungarus candidus (Malayan krait).